The following is a 355-amino-acid chain: DNA polymerase IV (355 aa).

In terms of domain architecture, UmuC spans 7–188 (IIHIDMDCFY…LPVRKLFGVG (182 aa)). Positions 11 and 106 each coordinate Mg(2+). Residue Glu-107 is part of the active site.

Belongs to the DNA polymerase type-Y family. Monomer. Mg(2+) serves as cofactor.

It is found in the cytoplasm. It catalyses the reaction DNA(n) + a 2'-deoxyribonucleoside 5'-triphosphate = DNA(n+1) + diphosphate. In terms of biological role, poorly processive, error-prone DNA polymerase involved in untargeted mutagenesis. Copies undamaged DNA at stalled replication forks, which arise in vivo from mismatched or misaligned primer ends. These misaligned primers can be extended by PolIV. Exhibits no 3'-5' exonuclease (proofreading) activity. May be involved in translesional synthesis, in conjunction with the beta clamp from PolIII. The chain is DNA polymerase IV from Legionella pneumophila subsp. pneumophila (strain Philadelphia 1 / ATCC 33152 / DSM 7513).